The sequence spans 332 residues: Ribosomal RNA small subunit methyltransferase H (332 aa).

Residues 38-40 (GGY), aspartate 56, phenylalanine 83, aspartate 104, and glutamine 111 each bind S-adenosyl-L-methionine. The segment at 309–332 (TETPFSEDISRPDTHIPRSRRQSA) is disordered.

It belongs to the methyltransferase superfamily. RsmH family.

It is found in the cytoplasm. It catalyses the reaction cytidine(1402) in 16S rRNA + S-adenosyl-L-methionine = N(4)-methylcytidine(1402) in 16S rRNA + S-adenosyl-L-homocysteine + H(+). In terms of biological role, specifically methylates the N4 position of cytidine in position 1402 (C1402) of 16S rRNA. The protein is Ribosomal RNA small subunit methyltransferase H of Zymomonas mobilis subsp. mobilis (strain ATCC 31821 / ZM4 / CP4).